A 117-amino-acid polypeptide reads, in one-letter code: Immunoglobulin heavy variable 4-28 (117 aa).

The N-terminal stretch at M1 to S19 is a signal peptide. The interval Q20–S44 is framework-1. One can recognise an Ig-like domain in the interval Q20–R117. C41 and C115 are joined by a disulfide. The complementarity-determining-1 stretch occupies residues G45–W53. Positions W54–Y70 are framework-2. Residues I71–T77 are complementarity-determining-2. The interval Y78–C115 is framework-3. The tract at residues A116–R117 is complementarity-determining-3.

Immunoglobulins are composed of two identical heavy chains and two identical light chains; disulfide-linked.

Its subcellular location is the secreted. The protein resides in the cell membrane. In terms of biological role, v region of the variable domain of immunoglobulin heavy chains that participates in the antigen recognition. Immunoglobulins, also known as antibodies, are membrane-bound or secreted glycoproteins produced by B lymphocytes. In the recognition phase of humoral immunity, the membrane-bound immunoglobulins serve as receptors which, upon binding of a specific antigen, trigger the clonal expansion and differentiation of B lymphocytes into immunoglobulins-secreting plasma cells. Secreted immunoglobulins mediate the effector phase of humoral immunity, which results in the elimination of bound antigens. The antigen binding site is formed by the variable domain of one heavy chain, together with that of its associated light chain. Thus, each immunoglobulin has two antigen binding sites with remarkable affinity for a particular antigen. The variable domains are assembled by a process called V-(D)-J rearrangement and can then be subjected to somatic hypermutations which, after exposure to antigen and selection, allow affinity maturation for a particular antigen. The sequence is that of Immunoglobulin heavy variable 4-28 from Homo sapiens (Human).